The chain runs to 160 residues: Cytosolic iron-sulfur assembly component 2A (160 aa).

4 residues coordinate Zn(2+): His-89, His-123, Glu-150, and Glu-153.

Belongs to the MIP18 family. In terms of assembly, monomer and homodimer. Component of the CIA complex. Interacts with CIAO1. Interacts with IREB2. Interacts with APAF1. Substantially enriched in macrophages.

The protein resides in the cytoplasm. Functionally, component of the cytosolic iron-sulfur protein assembly (CIA) complex, a multiprotein complex that mediates the incorporation of iron-sulfur cluster into extramitochondrial Fe/S proteins. As a CIA complex component and in collaboration with CIAO1 specifically matures ACO1 and stabilizes IREB2, connecting cytosolic iron-sulfur protein maturation with cellular iron regulation. May play a role in chromosome segregation through establishment of sister chromatid cohesion. May induce apoptosis in collaboration with APAF1. This chain is Cytosolic iron-sulfur assembly component 2A, found in Homo sapiens (Human).